The chain runs to 160 residues: Eukaryotic translation initiation factor 5A-1/2 (160 aa).

Residues 1 to 12 show a composition bias toward basic and acidic residues; sequence MSDEEHHFESKA. The segment at 1 to 21 is disordered; sequence MSDEEHHFESKADAGASKTYP. Lys-52 carries the hypusine modification.

This sequence belongs to the eIF-5A family. Lys-52 undergoes hypusination, a unique post-translational modification that consists in the addition of a butylamino group from spermidine to lysine side chain, leading to the formation of the unusual amino acid hypusine. eIF-5As are the only known proteins to undergo this modification, which is essential for their function.

Translation factor that promotes translation elongation and termination, particularly upon ribosome stalling at specific amino acid sequence contexts. Binds between the exit (E) and peptidyl (P) site of the ribosome and promotes rescue of stalled ribosome: specifically required for efficient translation of polyproline-containing peptides as well as other motifs that stall the ribosome. Acts as a ribosome quality control (RQC) cofactor by joining the RQC complex to facilitate peptidyl transfer during CAT tailing step. The chain is Eukaryotic translation initiation factor 5A-1/2 (EIF5A1) from Solanum tuberosum (Potato).